Consider the following 338-residue polypeptide: MKVYYDKDCDLSIIQSKKVAIIGYGSQGHAHACNLKDSGVDVYVGLRAGSASVAKAEAHGLTVKSVKDAVAAADVVMILTPDEFQGRLYKDEIEPNLKKGATLAFAHGFSIHYNQVVPRADLDVIMIAPKAPGHTVRSEFVRGGGIPDLIAVYQDASGNAKNLALSYACGVGGGRTGIIETTFKDETETDLFGEQAVLCGGCVELVKAGFETLVEAGYAPEMAYFECLHELKLIVDLMFEGGIANMNYSISNNAEYGEYVTGPEVINEQSRQAMRNALKRIQDGEYAKMFITEGAANYPSMTAYRRNNAAHQIEVVGEKLRTMMPWIAANKIVDKTKN.

The KARI N-terminal Rossmann domain maps to methionine 1–threonine 181. Residues tyrosine 24–glutamine 27, arginine 47, serine 50, serine 52, and aspartate 82–glutamine 85 contribute to the NADP(+) site. Histidine 107 is an active-site residue. Glycine 133 is a binding site for NADP(+). The 146-residue stretch at threonine 182–isoleucine 327 folds into the KARI C-terminal knotted domain. 4 residues coordinate Mg(2+): aspartate 190, glutamate 194, glutamate 226, and glutamate 230. Position 251 (serine 251) interacts with substrate.

The protein belongs to the ketol-acid reductoisomerase family. It depends on Mg(2+) as a cofactor.

The catalysed reaction is (2R)-2,3-dihydroxy-3-methylbutanoate + NADP(+) = (2S)-2-acetolactate + NADPH + H(+). The enzyme catalyses (2R,3R)-2,3-dihydroxy-3-methylpentanoate + NADP(+) = (S)-2-ethyl-2-hydroxy-3-oxobutanoate + NADPH + H(+). Its pathway is amino-acid biosynthesis; L-isoleucine biosynthesis; L-isoleucine from 2-oxobutanoate: step 2/4. The protein operates within amino-acid biosynthesis; L-valine biosynthesis; L-valine from pyruvate: step 2/4. Its function is as follows. Involved in the biosynthesis of branched-chain amino acids (BCAA). Catalyzes an alkyl-migration followed by a ketol-acid reduction of (S)-2-acetolactate (S2AL) to yield (R)-2,3-dihydroxy-isovalerate. In the isomerase reaction, S2AL is rearranged via a Mg-dependent methyl migration to produce 3-hydroxy-3-methyl-2-ketobutyrate (HMKB). In the reductase reaction, this 2-ketoacid undergoes a metal-dependent reduction by NADPH to yield (R)-2,3-dihydroxy-isovalerate. The protein is Ketol-acid reductoisomerase (NADP(+)) of Azotobacter vinelandii (strain DJ / ATCC BAA-1303).